The chain runs to 666 residues: Endogenous retrovirus group K member 24 Gag polyprotein (666 aa).

A lipid anchor (N-myristoyl glycine) is attached at Gly-2. The segment at 165 to 264 (GKGPELVGPS…APPSRQGSEL (100 aa)) is disordered. The span at 232 to 247 (GMPPAPQGRAPYPQPP) shows a compositional bias: pro residues. CCHC-type zinc fingers lie at residues 544–561 (GKCY…NCPV) and 580–597 (DLCP…QCRS). Residues 598–641 (KFDKNGQPLSGNEQRGQPQAPQQTGAFPIQPFVPQGFQGQQPPL) are disordered. Positions 604-622 (QPLSGNEQRGQPQAPQQTG) are enriched in polar residues. Over residues 624 to 640 (FPIQPFVPQGFQGQQPP) the composition is skewed to low complexity.

It belongs to the beta type-B retroviral Gag protein family. HERV class-II K(HML-2) gag subfamily. In terms of processing, myristoylation is essential for retroviral assembly. Alteration of the glycine residue leads to a block in the budding of particles and an accumulation of Gag inside the cell. Post-translationally, specific enzymatic cleavages may yield mature proteins.

It is found in the cell membrane. Functionally, the products of the Gag polyproteins of infectious retroviruses perform highly complex orchestrated tasks during the assembly, budding, maturation, and infection stages of the viral replication cycle. During viral assembly, the proteins form membrane associations and self-associations that ultimately result in budding of an immature virion from the infected cell. Gag precursors also function during viral assembly to selectively bind and package two plus strands of genomic RNA. Endogenous Gag proteins may have kept, lost or modified their original function during evolution. This chain is Endogenous retrovirus group K member 24 Gag polyprotein (ERVK-24), found in Homo sapiens (Human).